A 575-amino-acid chain; its full sequence is Interleukin-1 receptor-like 2 (575 aa).

Residues 1–19 (MWSLLLCGLSIALPLSVTA) form the signal peptide. Ig-like C2-type domains are found at residues 20–111 (DGCK…VNLT), 126–211 (PNLS…VLNG), and 222–318 (YGGS…MCHA). Topologically, residues 20–335 (DGCKDIFMKN…ILQLPAPDFR (316 aa)) are extracellular. N41, N59, N109, N127, N184, N234, N250, N266, and N299 each carry an N-linked (GlcNAc...) asparagine glycan. The cysteines at positions 42 and 95 are disulfide-linked. A disulfide bridge links C146 with C195. C249 and C316 are disulfide-bonded. A helical transmembrane segment spans residues 336 to 356 (AYLIGGLIALVAVAVSVVYIY). Residues 357–575 (NIFKIDIVLW…RRKKCTLTTG (219 aa)) lie on the Cytoplasmic side of the membrane. Residues 381 to 536 (KLYDAYVLYP…KFWKTVRYHM (156 aa)) form the TIR domain. E467 is an active-site residue.

The protein belongs to the interleukin-1 receptor family. Interacts with IL1RAP; the association is enhanced by IL36B indicative for an functional signaling complex and inhibited by IL36RN. Expressed in synovial fibroblasts and articular chondrocytes. Expressed in keratinocytes and monocyte-derived dendritic cells. Expressed in monocytes and myeloid dendritic cells; at protein level.

Its subcellular location is the membrane. The enzyme catalyses NAD(+) + H2O = ADP-D-ribose + nicotinamide + H(+). Functionally, receptor for interleukin-36 (IL36A, IL36B and IL36G). After binding to interleukin-36 associates with the coreceptor IL1RAP to form the interleukin-36 receptor complex which mediates interleukin-36-dependent activation of NF-kappa-B, MAPK and other pathways. The IL-36 signaling system is thought to be present in epithelial barriers and to take part in local inflammatory response; it is similar to the IL-1 system. Seems to be involved in skin inflammatory response by induction of the IL-23/IL-17/IL-22 pathway. The sequence is that of Interleukin-1 receptor-like 2 (IL1RL2) from Homo sapiens (Human).